Consider the following 464-residue polypeptide: Argininosuccinate lyase (464 aa).

It belongs to the lyase 1 family. Argininosuccinate lyase subfamily.

The protein localises to the cytoplasm. The enzyme catalyses 2-(N(omega)-L-arginino)succinate = fumarate + L-arginine. It participates in amino-acid biosynthesis; L-arginine biosynthesis; L-arginine from L-ornithine and carbamoyl phosphate: step 3/3. The protein is Argininosuccinate lyase of Pseudomonas fluorescens (strain SBW25).